The primary structure comprises 152 residues: Protein FYV5 (152 aa).

A run of 5 helical transmembrane segments spans residues 26 to 46, 56 to 76, 82 to 102, 106 to 126, and 127 to 147; these read IISICFSMLSFVFDFSVRICS, LISSSAFKVVSAFSLAGSCVL, VGIIVSLLLFNFSTCNFVLFL, LIDLFFCTFLPTPTFLPTPFF, and FMLHLPIFSLLNALELLYLII.

The protein localises to the cell membrane. It localises to the secreted. It is found in the cell wall. In terms of biological role, involved in maintaining an adequate ionic strength homeostasis of the cellular aqueous environment, necessary for normal growth rate. Required for survival upon exposure to K1 killer toxin and hence plays a role in cell wall glucan synthesis. Required for dithiothreitol (DTT) resistance. Involved in cell cycle progression. The chain is Protein FYV5 (FYV5) from Saccharomyces cerevisiae (strain ATCC 204508 / S288c) (Baker's yeast).